Reading from the N-terminus, the 348-residue chain is Ketol-acid reductoisomerase (NADP(+)) (348 aa).

The 179-residue stretch at 1 to 179 (MDVHYDADPA…GGTHAGVIET (179 aa)) folds into the KARI N-terminal Rossmann domain. NADP(+) is bound by residues 22–25 (YGSQ), R45, S48, S50, and 80–83 (DQHQ). H105 is a catalytic residue. G131 contributes to the NADP(+) binding site. In terms of domain architecture, KARI C-terminal knotted spans 180–325 (TFKDETETDL…QTLRGMMPWL (146 aa)). Mg(2+) is bound by residues D188, E192, E224, and E228. Substrate is bound at residue S249. Residues 323–348 (PWLNGDETSADEDAPDAADTAPASSS) are disordered. Positions 339-348 (AADTAPASSS) are enriched in low complexity.

Belongs to the ketol-acid reductoisomerase family. Mg(2+) serves as cofactor.

The catalysed reaction is (2R)-2,3-dihydroxy-3-methylbutanoate + NADP(+) = (2S)-2-acetolactate + NADPH + H(+). It catalyses the reaction (2R,3R)-2,3-dihydroxy-3-methylpentanoate + NADP(+) = (S)-2-ethyl-2-hydroxy-3-oxobutanoate + NADPH + H(+). It functions in the pathway amino-acid biosynthesis; L-isoleucine biosynthesis; L-isoleucine from 2-oxobutanoate: step 2/4. It participates in amino-acid biosynthesis; L-valine biosynthesis; L-valine from pyruvate: step 2/4. In terms of biological role, involved in the biosynthesis of branched-chain amino acids (BCAA). Catalyzes an alkyl-migration followed by a ketol-acid reduction of (S)-2-acetolactate (S2AL) to yield (R)-2,3-dihydroxy-isovalerate. In the isomerase reaction, S2AL is rearranged via a Mg-dependent methyl migration to produce 3-hydroxy-3-methyl-2-ketobutyrate (HMKB). In the reductase reaction, this 2-ketoacid undergoes a metal-dependent reduction by NADPH to yield (R)-2,3-dihydroxy-isovalerate. The chain is Ketol-acid reductoisomerase (NADP(+)) from Salinibacter ruber (strain DSM 13855 / M31).